The primary structure comprises 267 residues: Aliphatic sulfonates import ATP-binding protein SsuB 1 (267 aa).

In terms of domain architecture, ABC transporter spans 35-249 (VRVRGLRRVF…RRADPAFDRL (215 aa)). An ATP-binding site is contributed by 67–74 (GRSGSGKS).

This sequence belongs to the ABC transporter superfamily. Aliphatic sulfonates importer (TC 3.A.1.17.2) family. In terms of assembly, the complex is composed of two ATP-binding proteins (SsuB), two transmembrane proteins (SsuC) and a solute-binding protein (SsuA).

Its subcellular location is the cell membrane. It carries out the reaction ATP + H2O + aliphatic sulfonate-[sulfonate-binding protein]Side 1 = ADP + phosphate + aliphatic sulfonateSide 2 + [sulfonate-binding protein]Side 1.. Part of the ABC transporter complex SsuABC involved in aliphatic sulfonates import. Responsible for energy coupling to the transport system. The chain is Aliphatic sulfonates import ATP-binding protein SsuB 1 from Frankia alni (strain DSM 45986 / CECT 9034 / ACN14a).